The following is a 491-amino-acid chain: Ketol-acid reductoisomerase (NADP(+)) (491 aa).

The region spanning 15 to 208 (AQLGKCRFMG…GGHRAGVLES (194 aa)) is the KARI N-terminal Rossmann domain. Residues 45-48 (CGAQ), R68, R76, S78, and 108-110 (DKQ) contribute to the NADP(+) site. H132 is an active-site residue. An NADP(+)-binding site is contributed by G158. KARI C-terminal knotted domains follow at residues 209-344 (SFVA…TAPQ) and 345-484 (YEGK…MTDM). D217, E221, E389, and E393 together coordinate Mg(2+). S414 is a substrate binding site.

It belongs to the ketol-acid reductoisomerase family. It depends on Mg(2+) as a cofactor.

It carries out the reaction (2R)-2,3-dihydroxy-3-methylbutanoate + NADP(+) = (2S)-2-acetolactate + NADPH + H(+). The catalysed reaction is (2R,3R)-2,3-dihydroxy-3-methylpentanoate + NADP(+) = (S)-2-ethyl-2-hydroxy-3-oxobutanoate + NADPH + H(+). It participates in amino-acid biosynthesis; L-isoleucine biosynthesis; L-isoleucine from 2-oxobutanoate: step 2/4. Its pathway is amino-acid biosynthesis; L-valine biosynthesis; L-valine from pyruvate: step 2/4. In terms of biological role, involved in the biosynthesis of branched-chain amino acids (BCAA). Catalyzes an alkyl-migration followed by a ketol-acid reduction of (S)-2-acetolactate (S2AL) to yield (R)-2,3-dihydroxy-isovalerate. In the isomerase reaction, S2AL is rearranged via a Mg-dependent methyl migration to produce 3-hydroxy-3-methyl-2-ketobutyrate (HMKB). In the reductase reaction, this 2-ketoacid undergoes a metal-dependent reduction by NADPH to yield (R)-2,3-dihydroxy-isovalerate. This Escherichia coli O6:K15:H31 (strain 536 / UPEC) protein is Ketol-acid reductoisomerase (NADP(+)).